Here is a 727-residue protein sequence, read N- to C-terminus: DNA ligase (727 aa).

NAD(+) is bound by residues 71-75 (DGEFD), 120-121 (SL), and glutamate 150. The active-site N6-AMP-lysine intermediate is the lysine 152. The NAD(+) site is built by arginine 173, glutamate 213, lysine 329, and lysine 353. 4 residues coordinate Zn(2+): cysteine 447, cysteine 450, cysteine 466, and cysteine 472. The 90-residue stretch at 636–725 (SIERHLTGLS…PEAAAEAALP (90 aa)) folds into the BRCT domain.

This sequence belongs to the NAD-dependent DNA ligase family. LigA subfamily. Mg(2+) is required as a cofactor. Requires Mn(2+) as cofactor.

It carries out the reaction NAD(+) + (deoxyribonucleotide)n-3'-hydroxyl + 5'-phospho-(deoxyribonucleotide)m = (deoxyribonucleotide)n+m + AMP + beta-nicotinamide D-nucleotide.. In terms of biological role, DNA ligase that catalyzes the formation of phosphodiester linkages between 5'-phosphoryl and 3'-hydroxyl groups in double-stranded DNA using NAD as a coenzyme and as the energy source for the reaction. It is essential for DNA replication and repair of damaged DNA. The protein is DNA ligase of Saccharopolyspora erythraea (strain ATCC 11635 / DSM 40517 / JCM 4748 / NBRC 13426 / NCIMB 8594 / NRRL 2338).